Here is a 288-residue protein sequence, read N- to C-terminus: Single myb histone 4 (288 aa).

Disordered stretches follow at residues 1–42 (MGAP…PVLS), 62–87 (GLGS…SQPL), and 181–206 (DSLA…KPSK). Positions 1–60 (MGAPKQKWTSEEEDALRAGVRKHGAGKWRTIQKDPEFSPVLSSRSNIDLKDKWRNLSFSA) constitute an HTH myb-type domain. The H-T-H motif DNA-binding region spans 28 to 56 (WRTIQKDPEFSPVLSSRSNIDLKDKWRNL). The span at 76–87 (PSSSPSSSSQPL) shows a compositional bias: low complexity. Residues 113 to 181 (TLPKYGAMIM…KIDKSYRLPD (69 aa)) form the H15 domain. The stretch at 230–250 (KVADAEAKAHDAHDQTMEAER) forms a coiled coil.

It belongs to the histone H1/H5 family. SMH subfamily. Forms a homodimer and heterodimers.

The protein resides in the nucleus. It is found in the chromosome. It localises to the nucleolus. The protein localises to the telomere. Functionally, binds preferentially double-stranded telomeric repeats, but may also bind to the single telomeric strand. This is Single myb histone 4 (SMH4) from Zea mays (Maize).